The primary structure comprises 144 residues: 6-pyruvoyl tetrahydrobiopterin synthase (144 aa).

The residue at position 18 (Ser18) is a Phosphoserine. Zn(2+) is bound at residue His23. Ser27 carries the phosphoserine modification. Catalysis depends on Cys42, which acts as the Proton acceptor. The Zn(2+) site is built by His48 and His50. His89 acts as the Charge relay system in catalysis. A Phosphotyrosine modification is found at Tyr127. The active-site Charge relay system is Glu133.

It belongs to the PTPS family. In terms of assembly, homodimer. Homohexamer formed of two homotrimers in a head to head fashion. Requires Zn(2+) as cofactor. In terms of processing, phosphorylation of Ser-18 is required for maximal enzyme activity.

It carries out the reaction 7,8-dihydroneopterin 3'-triphosphate = 6-pyruvoyl-5,6,7,8-tetrahydropterin + triphosphate + H(+). It participates in cofactor biosynthesis; tetrahydrobiopterin biosynthesis; tetrahydrobiopterin from 7,8-dihydroneopterin triphosphate: step 1/3. Its function is as follows. Involved in the biosynthesis of tetrahydrobiopterin, an essential cofactor of aromatic amino acid hydroxylases. Catalyzes the transformation of 7,8-dihydroneopterin triphosphate into 6-pyruvoyl tetrahydropterin. The sequence is that of 6-pyruvoyl tetrahydrobiopterin synthase from Mus musculus (Mouse).